The primary structure comprises 1163 residues: Reticulon-4 (1163 aa).

Met-1 is subject to N-acetylmethionine. Disordered stretches follow at residues 1-184 (MEDI…AASE) and 244-270 (SAVS…RATN). The Cytoplasmic portion of the chain corresponds to 1 to 989 (MEDIDQSSLV…LYWRDIKKTG (989 aa)). Phosphoserine occurs at positions 7 and 16. The segment covering 7 to 16 (SSLVSSSTDS) has biased composition (low complexity). Residues 31–55 (EPEDEEDEEEEEDEEEDDEDLEELE) show a composition bias toward acidic residues. Residues 62–79 (AAGLSAAAVPPAAAAPLL) are compositionally biased toward low complexity. A compositionally biased stretch (pro residues) spans 87 to 101 (PPAPRGPLPAAPPAA). Residue Ser-107 is modified to Phosphoserine. Residues 138-147 (ARPPPPPPAG) show a composition bias toward pro residues. Ser-149, Ser-169, and Ser-171 each carry phosphoserine. 3 positions are modified to phosphoserine: Ser-329, Ser-333, and Ser-343. Thr-347 is modified (phosphothreonine). Basic and acidic residues predominate over residues 406-423 (DSLEQKSLGKDSEGRNED). Disordered regions lie at residues 406–437 (DSLE…KDSS) and 454–474 (TANT…DEKK). Phosphoserine is present on Ser-425. Phosphothreonine is present on Thr-429. Positions 461 to 474 (LEDHTSENKTDEKK) are enriched in basic and acidic residues. Phosphoserine occurs at positions 488, 689, 726, 766, and 830. Thr-832 carries the phosphothreonine modification. Phosphoserine is present on residues Ser-855, Ser-922, and Ser-962. In terms of domain architecture, Reticulon spans 976-1163 (VVDLLYWRDI…KIPGLKRKAD (188 aa)). A helical membrane pass occupies residues 990-1010 (VVFGASLFLLLSLTVFSIVSV). Residues 1011–1104 (TAYIALALLS…LMWVFTYVGA (94 aa)) lie on the Lumenal side of the membrane. At Lys-1075 the chain carries N6-acetyllysine. A helical membrane pass occupies residues 1105–1125 (LFNGLTLLILALISLFSIPVI). Over 1126–1163 (YERHQVQIDHYLGLANKSVKDAMAKIQAKIPGLKRKAD) the chain is Cytoplasmic.

In terms of assembly, binds to RTN4R. Interacts with ATL1. Interacts with TMEM170A. Interacts with RTN4IP1. Interacts in trans with CNTNAP1. Interacts with REEP5. Interacts with synaptic plasticity regulator PANTS; the interaction results in enhanced RTN4-mediated inhibition of AMPA receptor clustering. Interacts with GPR50. As to quaternary structure, homodimer. Interacts with BAD/Bcl-xl and BCL2. Interact with RTN3. Interacts with NGBR. Interacts with SPTLC1. Interacts with GRAMD4. Interacts with CDH5. Interacts with BACE1 and BACE2. Interacts with REEP5. Interacts with RETREG3. In terms of assembly, interacts with BACE1 and BACE2. Interacts with TMEM33. As to expression, isoforms A, B and C are present in optic nerve, spinal cord and cerebral cortex. Isoforms A and B are present in dorsal root ganglion, sciatic nerve and PC12 cells after longer exposure. Isoforms B and C are detected in kidney, cartilage, skin, lung and spleen. Isoform C is expressed at high level in skeletal muscle. In adult animals isoform A is expressed mainly in the nervous system.

The protein localises to the endoplasmic reticulum membrane. It is found in the cell membrane. Its subcellular location is the synapse. The protein resides in the cell junction. In terms of biological role, required to induce the formation and stabilization of endoplasmic reticulum (ER) tubules. They regulate membrane morphogenesis in the ER by promoting tubular ER production. They influence nuclear envelope expansion, nuclear pore complex formation and proper localization of inner nuclear membrane proteins. However each isoform have specific functions mainly depending on their tissue expression specificities. Functionally, developmental neurite growth regulatory factor with a role as a negative regulator of axon-axon adhesion and growth, and as a facilitator of neurite branching. Regulates neurite fasciculation, branching and extension in the developing nervous system. Involved in down-regulation of growth, stabilization of wiring and restriction of plasticity in the adult CNS. Regulates the radial migration of cortical neurons via an RTN4R-LINGO1 containing receptor complex. Acts as a negative regulator of central nervous system angiogenesis. Inhibits spreading, migration and sprouting of primary brain microvascular endothelial cells (MVECs). Also induces the retraction of MVECs lamellipodia and filopodia in a ROCK pathway-dependent manner. Mainly function in endothelial cells and vascular smooth muscle cells, is also involved in immune system regulation. Modulator of vascular remodeling, promotes the migration of endothelial cells but inhibits the migration of vascular smooth muscle cells. Regulates endothelial sphingolipid biosynthesis with direct effects on vascular function and blood pressure. Inhibits serine palmitoyltransferase, SPTLC1, the rate-limiting enzyme of the novo sphingolipid biosynthetic pathway, thereby controlling production of endothelial sphingosine-1-phosphate (S1P). Required to promote macrophage homing and functions such as cytokine/chemokine gene expression involved in angiogenesis, arteriogenesis and tissue repair. Mediates ICAM1 induced transendothelial migration of leukocytes such as monocytes and neutrophils and acute inflammation. Necessary for immune responses triggered by nucleic acid sensing TLRs, such as TLR9, is required for proper TLR9 location to endolysosomes. Also involved in immune response to LPS. Plays a role in liver regeneration through the modulation of hepatocytes proliferation. Reduces the anti-apoptotic activity of Bcl-xl and Bcl-2. This is likely consecutive to their change in subcellular location, from the mitochondria to the endoplasmic reticulum, after binding and sequestration. With isoform C, inhibits BACE1 activity and amyloid precursor protein processing. Its function is as follows. Regulates cardiomyocyte apoptosis upon hypoxic conditions. With isoform B, inhibits BACE1 activity and amyloid precursor protein processing. The protein is Reticulon-4 (Rtn4) of Rattus norvegicus (Rat).